The primary structure comprises 280 residues: Phosphonates import ATP-binding protein PhnC 1 (280 aa).

Residues 3 to 247 (FRLDAASVSY…LLRELYASES (245 aa)) enclose the ABC transporter domain. 36–43 (GPSGAGKT) lines the ATP pocket.

This sequence belongs to the ABC transporter superfamily. Phosphonates importer (TC 3.A.1.9.1) family. In terms of assembly, the complex is composed of two ATP-binding proteins (PhnC), two transmembrane proteins (PhnE) and a solute-binding protein (PhnD).

It localises to the cell inner membrane. It catalyses the reaction phosphonate(out) + ATP + H2O = phosphonate(in) + ADP + phosphate + H(+). Part of the ABC transporter complex PhnCDE involved in phosphonates import. Responsible for energy coupling to the transport system. This chain is Phosphonates import ATP-binding protein PhnC 1, found in Cupriavidus necator (strain ATCC 17699 / DSM 428 / KCTC 22496 / NCIMB 10442 / H16 / Stanier 337) (Ralstonia eutropha).